A 161-amino-acid chain; its full sequence is Anaerobic nitrite reductase Glb1-2 (161 aa).

The Globin domain maps to 9-158 (AFTEEQEALV…LASAIIAEMK (150 aa)). Positions 42–46 (EIAPP) match the Homodimerization motif. Heme b is bound by residues Ser-52, Lys-66, His-70, Lys-100, Thr-104, and His-105. Positions 112–124 (PEHFEVTKQALLD) match the Homodimerization motif.

This sequence belongs to the plant globin family. In terms of assembly, homodimer. It depends on heme b as a cofactor. Mainly expressed in root nodules and leaves, and, to a lower extent, in roots, stems, flowers and fruits. Accumulates in mature root nodules.

The catalysed reaction is Fe(III)-heme b-[protein] + nitric oxide + H2O = Fe(II)-heme b-[protein] + nitrite + 2 H(+). In terms of biological role, phytoglobin that reduces nitrite to nitric oxide (NO) under anoxic conditions (e.g. during flooding or in waterlogged soil) and upon root nodulation. Required for general plant development and during nodulation, especially for the onset of symbiosis. Monitors nitric oxide (NO) levels during early phase of the nitrogen-fixing symbiosis and buffers oxygen in functioning nodules. Necessary for the production of pods. May not function as an oxygen storage or transport protein. Has an unusually high affinity for O(2) through a hexacoordinate heme iron because of a very low dissociation constant. The sequence is that of Anaerobic nitrite reductase Glb1-2 from Lotus japonicus (Lotus corniculatus var. japonicus).